Here is a 148-residue protein sequence, read N- to C-terminus: 3-dehydroquinate dehydratase (148 aa).

Y23 serves as the catalytic Proton acceptor. The substrate site is built by N74, H80, and D87. Residue H100 is the Proton donor of the active site. Substrate contacts are provided by residues 101-102 (IS) and R111.

The protein belongs to the type-II 3-dehydroquinase family. Homododecamer.

The catalysed reaction is 3-dehydroquinate = 3-dehydroshikimate + H2O. It participates in metabolic intermediate biosynthesis; chorismate biosynthesis; chorismate from D-erythrose 4-phosphate and phosphoenolpyruvate: step 3/7. In terms of biological role, catalyzes a trans-dehydration via an enolate intermediate. This is 3-dehydroquinate dehydratase from Halothermothrix orenii (strain H 168 / OCM 544 / DSM 9562).